We begin with the raw amino-acid sequence, 215 residues long: Small ribosomal subunit protein uS7 (215 aa).

Belongs to the universal ribosomal protein uS7 family. As to quaternary structure, part of the 30S ribosomal subunit.

One of the primary rRNA binding proteins, it binds directly to 16S rRNA where it nucleates assembly of the head domain of the 30S subunit. Is located at the subunit interface close to the decoding center. This Pyrococcus furiosus (strain ATCC 43587 / DSM 3638 / JCM 8422 / Vc1) protein is Small ribosomal subunit protein uS7.